The following is a 226-amino-acid chain: Ribonuclease 3 (226 aa).

One can recognise an RNase III domain in the interval 6–128; the sequence is INRLQRKLGY…LIGGIFLDSD (123 aa). Glutamate 41 contacts Mg(2+). Aspartate 45 is an active-site residue. Mg(2+)-binding residues include aspartate 114 and glutamate 117. Glutamate 117 is an active-site residue. Residues 155-225 enclose the DRBM domain; the sequence is DPKTRLQEFL…AEQALKKLEL (71 aa).

The protein belongs to the ribonuclease III family. As to quaternary structure, homodimer. The cofactor is Mg(2+).

Its subcellular location is the cytoplasm. It catalyses the reaction Endonucleolytic cleavage to 5'-phosphomonoester.. Digests double-stranded RNA. Involved in the processing of primary rRNA transcript to yield the immediate precursors to the large and small rRNAs (23S and 16S). Processes some mRNAs, and tRNAs when they are encoded in the rRNA operon. Processes pre-crRNA and tracrRNA of type II CRISPR loci if present in the organism. The chain is Ribonuclease 3 from Pectobacterium carotovorum subsp. carotovorum (strain PC1).